Consider the following 699-residue polypeptide: Polyribonucleotide nucleotidyltransferase (699 aa).

Mg(2+) contacts are provided by aspartate 485 and aspartate 491. The KH domain occupies 552-611; the sequence is PRITTIKINPEKIRDVIGKGGAVIRALTEETGTTIELEDDGTVKIASSNGEATKEAIRRI. One can recognise an S1 motif domain in the interval 621 to 689; the sequence is GRIYNGKVIR…RQGRVRLSIK (69 aa).

The protein belongs to the polyribonucleotide nucleotidyltransferase family. In terms of assembly, component of the RNA degradosome, which is a multiprotein complex involved in RNA processing and mRNA degradation. Mg(2+) serves as cofactor.

The protein localises to the cytoplasm. It catalyses the reaction RNA(n+1) + phosphate = RNA(n) + a ribonucleoside 5'-diphosphate. Its function is as follows. Involved in mRNA degradation. Catalyzes the phosphorolysis of single-stranded polyribonucleotides processively in the 3'- to 5'-direction. This chain is Polyribonucleotide nucleotidyltransferase, found in Shewanella sp. (strain MR-4).